The following is a 148-amino-acid chain: Ubiquitin-conjugating enzyme E2 11 (148 aa).

The UBC core domain occupies 1–147; sequence MASKRILKEL…ARSWTQKYAM (147 aa). The active-site Glycyl thioester intermediate is Cys-85.

It belongs to the ubiquitin-conjugating enzyme family. Interacts with the E3 ubiquitin-protein ligases MBR1 and MBR2. As to expression, ubiquitously expressed. Mainly in petals.

The catalysed reaction is S-ubiquitinyl-[E1 ubiquitin-activating enzyme]-L-cysteine + [E2 ubiquitin-conjugating enzyme]-L-cysteine = [E1 ubiquitin-activating enzyme]-L-cysteine + S-ubiquitinyl-[E2 ubiquitin-conjugating enzyme]-L-cysteine.. Its pathway is protein modification; protein ubiquitination. Functionally, accepts the ubiquitin from the E1 complex and catalyzes its covalent attachment to other proteins. Mediates the selective degradation of short-lived and abnormal proteins. The chain is Ubiquitin-conjugating enzyme E2 11 (UBC11) from Arabidopsis thaliana (Mouse-ear cress).